The chain runs to 1482 residues: Chromosome partition protein MukB (1482 aa).

34-41 contacts ATP; sequence GGNGAGKS. Coiled-coil stretches lie at residues 326-416, 509-603, 780-805, 835-923, 979-1116, and 1210-1265; these read LEAD…AIQY, RHLA…RAPV, RAAR…ATLS, EAEI…AKLE, LSGN…AKAG, and EAIE…LQSV. The flexible hinge stretch occupies residues 666 to 783; that stretch reads PGGAEDSRLN…TLPLFGRAAR (118 aa).

This sequence belongs to the SMC family. MukB subfamily. Homodimerization via its hinge domain. Binds to DNA via its C-terminal region. Interacts, and probably forms a ternary complex, with MukE and MukF via its C-terminal region. The complex formation is stimulated by calcium or magnesium. Interacts with tubulin-related protein FtsZ.

The protein localises to the cytoplasm. Its subcellular location is the nucleoid. In terms of biological role, plays a central role in chromosome condensation, segregation and cell cycle progression. Functions as a homodimer, which is essential for chromosome partition. Involved in negative DNA supercoiling in vivo, and by this means organize and compact chromosomes. May achieve or facilitate chromosome segregation by condensation DNA from both sides of a centrally located replisome during cell division. The sequence is that of Chromosome partition protein MukB from Enterobacter sp. (strain 638).